Reading from the N-terminus, the 196-residue chain is Transmembrane protein 52 (196 aa).

A signal peptide spans 1–28; that stretch reads MAPGPSATQGILLLLPLLPLSQVTLGSA. A helical transmembrane segment spans residues 47–67; it reads LWHVGLILLAILLMLLCGVTA. Residues 162 to 196 form a disordered region; sequence EEVAAPSEKTNSLPEALEPETTGGPQEPGPSAQRP.

The protein localises to the membrane. In Mus musculus (Mouse), this protein is Transmembrane protein 52 (Tmem52).